A 313-amino-acid chain; its full sequence is uncharacterized protein (313 aa).

2 disordered regions span residues 24 to 53 (EEGEDMRSGAGSGGHHDDYFLESNRSPTPN) and 190 to 291 (TALS…PCAR). The segment covering 211–229 (TQNYVLKLQLSSPNSQPMS) has biased composition (polar residues). The segment covering 239–260 (SCSSSNCSSSSSSSACSSVSIS) has biased composition (low complexity). A compositionally biased stretch (polar residues) spans 261-284 (DPNNITAYETNNVNPQFPSNQPLD).

This is an uncharacterized protein from Saccharomyces cerevisiae (strain ATCC 204508 / S288c) (Baker's yeast).